Reading from the N-terminus, the 415-residue chain is Actin-like protein 7B (415 aa).

The segment at 1–35 (MATRNSPMALGTAQGDPGEAGTRPGSDAGLRDTGA) is disordered. Ser6 carries the phosphoserine modification.

The protein belongs to the actin family.

The protein localises to the cytoplasm. It is found in the cytoskeleton. This is Actin-like protein 7B (ACTL7B) from Macaca fascicularis (Crab-eating macaque).